The sequence spans 754 residues: 5-methyltetrahydropteroyltriglutamate--homocysteine methyltransferase (754 aa).

5-methyltetrahydropteroyltri-L-glutamate-binding positions include 15–18 (RELK) and Lys-114. Residues 430–432 (IGS) and Glu-483 contribute to the L-homocysteine site. L-methionine-binding positions include 430 to 432 (IGS) and Glu-483. Residues 514–515 (RC) and Trp-560 each bind 5-methyltetrahydropteroyltri-L-glutamate. An L-homocysteine-binding site is contributed by Asp-598. Residue Asp-598 coordinates L-methionine. Glu-604 lines the 5-methyltetrahydropteroyltri-L-glutamate pocket. 3 residues coordinate Zn(2+): His-641, Cys-643, and Glu-665. Catalysis depends on His-694, which acts as the Proton donor. Cys-726 contributes to the Zn(2+) binding site.

Belongs to the vitamin-B12 independent methionine synthase family. Requires Zn(2+) as cofactor.

The catalysed reaction is 5-methyltetrahydropteroyltri-L-glutamate + L-homocysteine = tetrahydropteroyltri-L-glutamate + L-methionine. It participates in amino-acid biosynthesis; L-methionine biosynthesis via de novo pathway; L-methionine from L-homocysteine (MetE route): step 1/1. In terms of biological role, catalyzes the transfer of a methyl group from 5-methyltetrahydrofolate to homocysteine resulting in methionine formation. This chain is 5-methyltetrahydropteroyltriglutamate--homocysteine methyltransferase, found in Campylobacter jejuni (strain RM1221).